Here is a 159-residue protein sequence, read N- to C-terminus: Ribosomal RNA large subunit methyltransferase H (159 aa).

Residues Leu76, Gly108, and 127-132 (FSKMTF) contribute to the S-adenosyl-L-methionine site.

This sequence belongs to the RNA methyltransferase RlmH family. In terms of assembly, homodimer.

Its subcellular location is the cytoplasm. It carries out the reaction pseudouridine(1915) in 23S rRNA + S-adenosyl-L-methionine = N(3)-methylpseudouridine(1915) in 23S rRNA + S-adenosyl-L-homocysteine + H(+). Specifically methylates the pseudouridine at position 1915 (m3Psi1915) in 23S rRNA. The polypeptide is Ribosomal RNA large subunit methyltransferase H (Bacillus velezensis (strain DSM 23117 / BGSC 10A6 / LMG 26770 / FZB42) (Bacillus amyloliquefaciens subsp. plantarum)).